A 143-amino-acid polypeptide reads, in one-letter code: Flagellar assembly factor FliW (143 aa).

The protein belongs to the FliW family. In terms of assembly, interacts with translational regulator CsrA and flagellin(s).

It localises to the cytoplasm. In terms of biological role, acts as an anti-CsrA protein, binds CsrA and prevents it from repressing translation of its target genes, one of which is flagellin. Binds to flagellin and participates in the assembly of the flagellum. The chain is Flagellar assembly factor FliW from Clostridium botulinum (strain Okra / Type B1).